We begin with the raw amino-acid sequence, 620 residues long: 1-deoxy-D-xylulose-5-phosphate synthase (620 aa).

Residues His80 and 121–123 (GHS) each bind thiamine diphosphate. Asp152 is a Mg(2+) binding site. Residues 153 to 154 (GA), Asn181, Tyr288, and Glu370 contribute to the thiamine diphosphate site. Asn181 serves as a coordination point for Mg(2+).

The protein belongs to the transketolase family. DXPS subfamily. In terms of assembly, homodimer. The cofactor is Mg(2+). Thiamine diphosphate serves as cofactor.

The enzyme catalyses D-glyceraldehyde 3-phosphate + pyruvate + H(+) = 1-deoxy-D-xylulose 5-phosphate + CO2. The protein operates within metabolic intermediate biosynthesis; 1-deoxy-D-xylulose 5-phosphate biosynthesis; 1-deoxy-D-xylulose 5-phosphate from D-glyceraldehyde 3-phosphate and pyruvate: step 1/1. Catalyzes the acyloin condensation reaction between C atoms 2 and 3 of pyruvate and glyceraldehyde 3-phosphate to yield 1-deoxy-D-xylulose-5-phosphate (DXP). The chain is 1-deoxy-D-xylulose-5-phosphate synthase from Photobacterium profundum (strain SS9).